A 269-amino-acid chain; its full sequence is Hdr-like menaquinol oxidoreductase iron-sulfur subunit 1 (269 aa).

Positions 1–26 form a signal peptide, tat-type signal; the sequence is MMSRRKFLLLTGAAAAGAILTPQISA. Residues Cys-52, Cys-55, Cys-72, Cys-76, Cys-118, Cys-121, Cys-126, Cys-130, Cys-150, Cys-153, Cys-156, Cys-160, Cys-194, Cys-197, Cys-215, and Cys-219 each contribute to the [4Fe-4S] cluster site. Residues 141-170 enclose the 4Fe-4S ferredoxin-type domain; that stretch reads GIVEIDMHRCIGCRYCMIACPYGARCFNFI.

In terms of assembly, consists of five subunits: an integral membrane subunit, a cytochrome b-like subunit, a cytochrome c subunit and two iron-sulfur subunits. [4Fe-4S] cluster is required as a cofactor. Post-translationally, predicted to be exported by the Tat system. The position of the signal peptide cleavage has been experimentally proven.

The protein resides in the cell membrane. Its function is as follows. Has menaquinol-oxidizing activity. HmeA, HmeB and HmeE subunits may together catalyze electron transfer from menaquinol to cytochrome c. In Archaeoglobus fulgidus (strain ATCC 49558 / DSM 4304 / JCM 9628 / NBRC 100126 / VC-16), this protein is Hdr-like menaquinol oxidoreductase iron-sulfur subunit 1 (hmeA).